A 576-amino-acid chain; its full sequence is Quinone-reactive Ni/Fe-hydrogenase large chain (576 aa).

Cys-62, Cys-65, Cys-547, and Cys-550 together coordinate Ni(2+).

Belongs to the [NiFe]/[NiFeSe] hydrogenase large subunit family. Heterodimer of a large and a small subunit. Requires Ni(2+) as cofactor.

The protein localises to the cell membrane. The enzyme catalyses H2 + a menaquinone = a menaquinol. Functionally, this enzyme recycles the H(2) produced by nitrogenase to increase the production of ATP and to protect nitrogenase against inhibition or damage by O(2) under carbon- or phosphate-limited conditions. The protein is Quinone-reactive Ni/Fe-hydrogenase large chain (hydB) of Wolinella succinogenes (strain ATCC 29543 / DSM 1740 / CCUG 13145 / JCM 31913 / LMG 7466 / NCTC 11488 / FDC 602W) (Vibrio succinogenes).